The sequence spans 133 residues: Ribosome-binding factor A (133 aa).

This sequence belongs to the RbfA family. Monomer. Binds 30S ribosomal subunits, but not 50S ribosomal subunits or 70S ribosomes.

Its subcellular location is the cytoplasm. In terms of biological role, one of several proteins that assist in the late maturation steps of the functional core of the 30S ribosomal subunit. Associates with free 30S ribosomal subunits (but not with 30S subunits that are part of 70S ribosomes or polysomes). Required for efficient processing of 16S rRNA. May interact with the 5'-terminal helix region of 16S rRNA. The protein is Ribosome-binding factor A of Chlamydia muridarum (strain MoPn / Nigg).